The following is a 267-amino-acid chain: Phosphate import ATP-binding protein PstB 2 (267 aa).

In terms of domain architecture, ABC transporter spans 21-262 (LSTKDVHVYY…AKLQSTNDYV (242 aa)). 53-60 (GPSGSGKS) lines the ATP pocket.

The protein belongs to the ABC transporter superfamily. Phosphate importer (TC 3.A.1.7) family. The complex is composed of two ATP-binding proteins (PstB), two transmembrane proteins (PstC and PstA) and a solute-binding protein (PstS).

It is found in the cell membrane. The catalysed reaction is phosphate(out) + ATP + H2O = ADP + 2 phosphate(in) + H(+). Functionally, part of the ABC transporter complex PstSACB involved in phosphate import. Responsible for energy coupling to the transport system. This Streptococcus pneumoniae serotype 4 (strain ATCC BAA-334 / TIGR4) protein is Phosphate import ATP-binding protein PstB 2.